Reading from the N-terminus, the 305-residue chain is MTAQLSYVEAVVVGAFQGVTELFPVSSLGHAVLVPALVGGRWAQDLSVSAHRSPYLAFIVGLHVATAAALLVFFWRDWVRILAGFFSSLRHRRIRTPDERLAWLIVVGTIPVGLAGLALEQLFRTTLGKPVPAAAFLLLNSVALYAGEVLRRRVAPVADEPAVPDAEQQHGDEASDNRLAQLPLRRGVLIGAAQILALLPGISRSGITIVAGLWRGLSHEDAARFSFLLATPIILAAGVYKIPELFGPLGAGIGGQVLAGSIASFVCAYLAVRYLTRYFQTRTLTPFAIYCAVAGGASLVWLALR.

A run of 8 helical transmembrane segments spans residues 18 to 38 (GVTE…PALV), 55 to 75 (YLAF…VFFW), 103 to 123 (WLIV…EQLF), 130 to 150 (PVPA…GEVL), 187 to 207 (GVLI…RSGI), 225 to 245 (FSFL…IPEL), 246 to 266 (FGPL…ASFV), and 284 to 304 (LTPF…WLAL).

It belongs to the UppP family.

The protein localises to the cell membrane. It catalyses the reaction di-trans,octa-cis-undecaprenyl diphosphate + H2O = di-trans,octa-cis-undecaprenyl phosphate + phosphate + H(+). Functionally, catalyzes the dephosphorylation of undecaprenyl diphosphate (UPP). Confers resistance to bacitracin. The protein is Undecaprenyl-diphosphatase of Mycobacterium avium (strain 104).